The primary structure comprises 829 residues: Ent-cassa-12,15-diene synthase (829 aa).

Residues Met-1–Asp-50 are disordered. Polar residues predominate over residues Gly-23–Ser-37. Mg(2+) is bound by residues Asp-576, Asp-580, Asn-720, and Glu-728. The DDXXD motif signature appears at Asp-576–Asp-580.

The protein belongs to the terpene synthase family. Requires Mg(2+) as cofactor. Expressed in roots and stems.

It carries out the reaction ent-copalyl diphosphate = ent-cassa-12,15-diene + diphosphate. In terms of biological role, involved in phytocassane phytoalexins biosynthesis. Catalyzes the conversion of ent-copalyl diphosphate to the phytoalexin precursor ent-cassa-12,15-diene. This chain is Ent-cassa-12,15-diene synthase (KSL7), found in Oryza sativa subsp. japonica (Rice).